A 160-amino-acid polypeptide reads, in one-letter code: NADH-quinone oxidoreductase subunit B (160 aa).

[4Fe-4S] cluster is bound by residues C37, C38, C102, and C132.

This sequence belongs to the complex I 20 kDa subunit family. As to quaternary structure, NDH-1 is composed of 14 different subunits. Subunits NuoB, C, D, E, F, and G constitute the peripheral sector of the complex. Requires [4Fe-4S] cluster as cofactor.

It is found in the cell inner membrane. The enzyme catalyses a quinone + NADH + 5 H(+)(in) = a quinol + NAD(+) + 4 H(+)(out). Its function is as follows. NDH-1 shuttles electrons from NADH, via FMN and iron-sulfur (Fe-S) centers, to quinones in the respiratory chain. Couples the redox reaction to proton translocation (for every two electrons transferred, four hydrogen ions are translocated across the cytoplasmic membrane), and thus conserves the redox energy in a proton gradient. The polypeptide is NADH-quinone oxidoreductase subunit B (Neisseria gonorrhoeae (strain NCCP11945)).